The sequence spans 72 residues: Translation initiation factor IF-1 (72 aa).

The S1-like domain maps to 1-72 (MSKDDVIEVE…TRGRIIYRHK (72 aa)).

Belongs to the IF-1 family. As to quaternary structure, component of the 30S ribosomal translation pre-initiation complex which assembles on the 30S ribosome in the order IF-2 and IF-3, IF-1 and N-formylmethionyl-tRNA(fMet); mRNA recruitment can occur at any time during PIC assembly.

It localises to the cytoplasm. Its function is as follows. One of the essential components for the initiation of protein synthesis. Stabilizes the binding of IF-2 and IF-3 on the 30S subunit to which N-formylmethionyl-tRNA(fMet) subsequently binds. Helps modulate mRNA selection, yielding the 30S pre-initiation complex (PIC). Upon addition of the 50S ribosomal subunit IF-1, IF-2 and IF-3 are released leaving the mature 70S translation initiation complex. The sequence is that of Translation initiation factor IF-1 from Carboxydothermus hydrogenoformans (strain ATCC BAA-161 / DSM 6008 / Z-2901).